Consider the following 463-residue polypeptide: Retinoic acid receptor RXR-gamma (463 aa).

The tract at residues 1-138 is modulating; it reads MYGNYSHFMK…TSPGSLVKHI (138 aa). Residues 18-53 are disordered; it reads SPGHTGSTSMSPSAALSTGKPMDSHPSYTDTPVSAP. Over residues 21-33 the composition is skewed to polar residues; the sequence is HTGSTSMSPSAAL. NR C4-type zinc fingers lie at residues 139–159 and 175–194; these read CAIC…CEGC and CRDN…CQYC. A DNA-binding region (nuclear receptor) is located at residues 139 to 204; that stretch reads CAICGDRSSG…RYQKCLVMGM (66 aa). A hinge region spans residues 205-230; it reads KREAVQEERQRSRERAESEAECASSG. Residues 211–222 show a composition bias toward basic and acidic residues; that stretch reads EERQRSRERAES. Residues 211-232 are disordered; the sequence is EERQRSRERAESEAECASSGHE. The NR LBD domain maps to 231–459; the sequence is HEDMPVERIL…TFLMEMLETP (229 aa).

This sequence belongs to the nuclear hormone receptor family. NR2 subfamily. Homodimer. Heterodimer with a RAR molecule. Binds DNA preferentially as a RAR/RXR heterodimer. Interacts with RARA. Post-translationally, acetylated by EP300.

The protein resides in the nucleus. Its subcellular location is the cytoplasm. In terms of biological role, receptor for retinoic acid. Retinoic acid receptors bind as heterodimers to their target response elements in response to their ligands, all-trans or 9-cis retinoic acid, and regulate gene expression in various biological processes. The RAR/RXR heterodimers bind to the retinoic acid response elements (RARE) composed of tandem 5'-AGGTCA-3' sites known as DR1-DR5. The high affinity ligand for RXRs is 9-cis retinoic acid. The polypeptide is Retinoic acid receptor RXR-gamma (RXRG) (Pongo abelii (Sumatran orangutan)).